We begin with the raw amino-acid sequence, 367 residues long: UDP-N-acetylglucosamine--N-acetylmuramyl-(pentapeptide) pyrophosphoryl-undecaprenol N-acetylglucosamine transferase (367 aa).

Residues 15–17, Asn-127, Arg-163, Ser-191, Ile-249, and Gln-294 contribute to the UDP-N-acetyl-alpha-D-glucosamine site; that span reads TGG.

It belongs to the glycosyltransferase 28 family. MurG subfamily.

It localises to the cell inner membrane. The catalysed reaction is di-trans,octa-cis-undecaprenyl diphospho-N-acetyl-alpha-D-muramoyl-L-alanyl-D-glutamyl-meso-2,6-diaminopimeloyl-D-alanyl-D-alanine + UDP-N-acetyl-alpha-D-glucosamine = di-trans,octa-cis-undecaprenyl diphospho-[N-acetyl-alpha-D-glucosaminyl-(1-&gt;4)]-N-acetyl-alpha-D-muramoyl-L-alanyl-D-glutamyl-meso-2,6-diaminopimeloyl-D-alanyl-D-alanine + UDP + H(+). It participates in cell wall biogenesis; peptidoglycan biosynthesis. Its function is as follows. Cell wall formation. Catalyzes the transfer of a GlcNAc subunit on undecaprenyl-pyrophosphoryl-MurNAc-pentapeptide (lipid intermediate I) to form undecaprenyl-pyrophosphoryl-MurNAc-(pentapeptide)GlcNAc (lipid intermediate II). In Burkholderia ambifaria (strain MC40-6), this protein is UDP-N-acetylglucosamine--N-acetylmuramyl-(pentapeptide) pyrophosphoryl-undecaprenol N-acetylglucosamine transferase.